The sequence spans 109 residues: Nucleoid-associated protein VV2410 (109 aa).

The tract at residues 1-22 (MFGKGGMGNLMKQAQQMQERMQ) is disordered.

This sequence belongs to the YbaB/EbfC family. Homodimer.

It is found in the cytoplasm. The protein resides in the nucleoid. Functionally, binds to DNA and alters its conformation. May be involved in regulation of gene expression, nucleoid organization and DNA protection. The sequence is that of Nucleoid-associated protein VV2410 from Vibrio vulnificus (strain YJ016).